The primary structure comprises 689 residues: Methionine--tRNA ligase (689 aa).

Positions 13 to 23 (PYANGNFHIGH) match the 'HIGH' region motif. Zn(2+) is bound by residues Cys144, Cys147, Cys157, and Cys160. The short motif at 341-345 (KMSKS) is the 'KMSKS' region element. Position 344 (Lys344) interacts with ATP. Positions 583–689 (DFAKVDLRIA…PGASPGLRVR (107 aa)) constitute a tRNA-binding domain.

This sequence belongs to the class-I aminoacyl-tRNA synthetase family. MetG type 1 subfamily. Homodimer. Zn(2+) is required as a cofactor.

It localises to the cytoplasm. The catalysed reaction is tRNA(Met) + L-methionine + ATP = L-methionyl-tRNA(Met) + AMP + diphosphate. Its function is as follows. Is required not only for elongation of protein synthesis but also for the initiation of all mRNA translation through initiator tRNA(fMet) aminoacylation. In Polaromonas sp. (strain JS666 / ATCC BAA-500), this protein is Methionine--tRNA ligase.